Consider the following 196-residue polypeptide: ATP-dependent Clp protease proteolytic subunit (196 aa).

Catalysis depends on serine 101, which acts as the Nucleophile. Histidine 126 is a catalytic residue.

It belongs to the peptidase S14 family. In terms of assembly, component of the chloroplastic Clp protease core complex.

The protein resides in the plastid. It localises to the chloroplast stroma. The catalysed reaction is Hydrolysis of proteins to small peptides in the presence of ATP and magnesium. alpha-casein is the usual test substrate. In the absence of ATP, only oligopeptides shorter than five residues are hydrolyzed (such as succinyl-Leu-Tyr-|-NHMec, and Leu-Tyr-Leu-|-Tyr-Trp, in which cleavage of the -Tyr-|-Leu- and -Tyr-|-Trp bonds also occurs).. In terms of biological role, cleaves peptides in various proteins in a process that requires ATP hydrolysis. Has a chymotrypsin-like activity. Plays a major role in the degradation of misfolded proteins. This Barbarea verna (Land cress) protein is ATP-dependent Clp protease proteolytic subunit.